Reading from the N-terminus, the 581-residue chain is MAVAGAAYREPLVHWCTQQLQKTFALDVSEEIIQYVLSIENAEEIREYVTDLLQGNEGKKGQFIEDLITKWQKNDQEFISDSFQQCLRKDEILDGQRSVDQLKRSRRKGRNKQEVPAFPEPDVAVEVKTPLDLAKAQESNNSVKKKTRFVNLYTREGQDKLAVLLPGRHPCDCLGQKHKLINNCLVCGRIVCEQEGSGPCLFCGSLVCTNEEQDILQRDSNKSQKLLKKLMSGAETSGKVDVSTKDLLPHQESRMKSGLEKAIKHKEKLLEFDRTSIRRTQVIDDESDYFASDSNQWLSKVEREMLQKREEELRELRHASRLSKKVTIDFAGRKILEDENPLAEYHSRLDETIQAIASGTLNQSLVTLDRSCEEPLGVLVNPNMYQASPQWVDNTGSTPQKKTSLSAGPRLEPSLHQHQLRIQDQEFQEGFDGGWCLSMHQPWASLLVRGIKRVEGRSWYTPHRGRLWIAATGKRPSPQEVSELQATYRLLRGKDVEFPNDYPSGCLLGCVDLIDCLSQKQFQEQFPDISQESDSSFVFICKNPQEMVVKFPIKGNPKIWKLDSKIHQGAKKGLMKQNKAV.

Ala-2 is subject to N-acetylalanine. The disordered stretch occupies residues 100-121 (DQLKRSRRKGRNKQEVPAFPEP). Residues 167 to 219 (GRHPCDCLGQKHKLINNCLVCGRIVCEQEGSGPCLFCGSLVCTNEEQDILQRD) form a C4-type zinc finger. The interval 200–300 (CLFCGSLVCT…ASDSNQWLSK (101 aa)) is mediates interaction with DDRGK1. The residue at position 276 (Ser-276) is a Phosphoserine. Tyr-289 is modified (phosphotyrosine). Residues 300–400 (KVEREMLQKR…WVDNTGSTPQ (101 aa)) form a mediates interaction with UFL1 region. Glycyl lysine isopeptide (Lys-Gly) (interchain with G-Cter in UFM1) cross-links involve residues Lys-324 and Lys-334. Positions 390-406 (QWVDNTGSTPQKKTSLS) are enriched in polar residues. The interval 390-410 (QWVDNTGSTPQKKTSLSAGPR) is disordered. The 95-residue stretch at 437–531 (LSMHQPWASL…FQEQFPDISQ (95 aa)) folds into the ASCH domain.

As to quaternary structure, interacts with the thyroid hormone receptor/TR (via the ligand-binding domain); this interaction requires the presence of thyroid hormone. Interacts with the androgen receptor/AR; in an androgen, testosterone and dihydrotestosterone-dependent manner. Interacts with ESR1 (estrogen ligand-bound); competes with UFSP2. Interacts with UFSP2; competes with ligand-bound ESR1. Interacts with DDRGK1 and UFL1; the interaction with DDRGK1 is direct. Interacts with NCOA1. Interacts with EP300. Part of the ASC-1 complex, that contains TRIP4, ASCC1, ASCC2 and ASCC3. Identified in the RQT (ribosome quality control trigger) complex, that contains ASCC2, ASCC3 and TRIP4. Interacts with NEK6. Interacts with CSRP1. Interacts with ZCCHC4. Post-translationally, phosphorylated by NEK6. Polyufmylated by the UFM1-conjugating system composed of the enzymes UBA5, UFC1 and UFL1. Deufmylated by the protease UFSP2. Ufmylation of TRIP4 is promoted by ligand-bound nuclear receptors that compete with UFSP2 for interaction with TRIP4. Nuclear receptors-induced ufmylation promotes the recruitment of additional transcriptional coactivators like EP300 and NCOA1 and therefore the assembly of a coactivator complex facilitating nuclear receptor-mediated transcription. In terms of tissue distribution, ubiquitously expressed. Expressed in the spinal cord, brain, paraspinal ganglia, thyroid, and submandibular glands. Expressed at low level in all the muscles (at protein level) but with higher expression in axial than in limb muscles.

It is found in the nucleus. The protein resides in the cytoplasm. The protein localises to the cytosol. It localises to the cytoskeleton. Its subcellular location is the microtubule organizing center. It is found in the centrosome. Transcription coactivator which associates with nuclear receptors, transcriptional coactivators including EP300, CREBBP and NCOA1, and basal transcription factors like TBP and TFIIA to facilitate nuclear receptors-mediated transcription. May thereby play an important role in establishing distinct coactivator complexes under different cellular conditions. Plays a role in thyroid hormone receptor and estrogen receptor transactivation. Also involved in androgen receptor transactivation. Plays a pivotal role in the transactivation of NF-kappa-B, SRF and AP1. Acts as a mediator of transrepression between nuclear receptor and either AP1 or NF-kappa-B. May play a role in the development of neuromuscular junction. May play a role in late myogenic differentiation. Also functions as part of the RQC trigger (RQT) complex that activates the ribosome quality control (RQC) pathway, a pathway that degrades nascent peptide chains during problematic translation. The chain is Activating signal cointegrator 1 from Mus musculus (Mouse).